The following is a 267-amino-acid chain: Pro-opiomelanocortin (267 aa).

The signal sequence occupies residues 1-26; the sequence is MPRSCCSRSGALLLALLLQASMEVRG. Cysteine 28 and cysteine 50 are disulfide-bonded. Threonine 71 is a glycosylation site (O-linked (HexNAc...) threonine). The residue at position 87 (phenylalanine 87) is a Phenylalanine amide. Disordered stretches follow at residues 88-175, 181-200, and 222-241; these read GRRN…FPLE, TGQR…DGAG, and RMEH…GGFM. Residue asparagine 91 is glycosylated (N-linked (GlcNAc...) asparagine). A compositionally biased stretch (basic and acidic residues) spans 121 to 145; the sequence is PEPRSDGAKPGPREGKRSYSMEHFR. Glutamic acid 1-amide is present on glutamate 134. Position 138 is an N-acetylserine; in Corticotropin (serine 138). Residue valine 150 is modified to Valine amide. Serine 168 is modified (phosphoserine). The segment covering 222–237 has biased composition (basic and acidic residues); sequence RMEHFRWGSPPKDKRY.

The protein belongs to the POMC family. In terms of processing, specific enzymatic cleavages at paired basic residues yield the different active peptides. Post-translationally, O-glycosylated; reducing sugar is probably N-acetylgalactosamine. In terms of tissue distribution, ACTH and MSH are produced by the pituitary gland.

The protein localises to the secreted. In terms of biological role, stimulates the adrenal glands to release cortisol. Its function is as follows. Anorexigenic peptide. Increases the pigmentation of skin by increasing melanin production in melanocytes. Increases the pigmentation of skin by increasing melanin production in melanocytes. Functionally, endogenous orexigenic opiate. In terms of biological role, endogenous opiate. This Homo sapiens (Human) protein is Pro-opiomelanocortin (POMC).